A 389-amino-acid polypeptide reads, in one-letter code: 1-deoxy-D-xylulose 5-phosphate reductoisomerase (389 aa).

NADPH-binding residues include S11, G12, S13, V14, N39, and N122. 1-deoxy-D-xylulose 5-phosphate is bound at residue K123. Residue E124 participates in NADPH binding. D148 is a Mn(2+) binding site. Residues S149, E150, S174, and H197 each coordinate 1-deoxy-D-xylulose 5-phosphate. E150 contacts Mn(2+). G203 lines the NADPH pocket. Positions 210, 215, 216, and 219 each coordinate 1-deoxy-D-xylulose 5-phosphate. E219 is a Mn(2+) binding site.

It belongs to the DXR family. It depends on Mg(2+) as a cofactor. Mn(2+) serves as cofactor.

The enzyme catalyses 2-C-methyl-D-erythritol 4-phosphate + NADP(+) = 1-deoxy-D-xylulose 5-phosphate + NADPH + H(+). It participates in isoprenoid biosynthesis; isopentenyl diphosphate biosynthesis via DXP pathway; isopentenyl diphosphate from 1-deoxy-D-xylulose 5-phosphate: step 1/6. Functionally, catalyzes the NADPH-dependent rearrangement and reduction of 1-deoxy-D-xylulose-5-phosphate (DXP) to 2-C-methyl-D-erythritol 4-phosphate (MEP). The sequence is that of 1-deoxy-D-xylulose 5-phosphate reductoisomerase from Leptospira borgpetersenii serovar Hardjo-bovis (strain JB197).